The sequence spans 142 residues: uncharacterized protein (142 aa).

In terms of domain architecture, N-acetyltransferase spans Met-1–Ala-138.

This is an uncharacterized protein from Bacillus subtilis (strain 168).